The primary structure comprises 1021 residues: SWI/SNF-related matrix-associated actin-dependent regulator of chromatin subfamily A containing DEAD/H box 1 (1021 aa).

Residue Met-1 is modified to N-acetylmethionine. 2 disordered regions span residues 1–82 and 124–151; these read MNLF…SLSC and SEPSEDEESHDLPSVTRRNDSSELEDLS. Over residues 7–19 the composition is skewed to basic and acidic residues; the sequence is DRFRFEKRSKIEE. The span at 22 to 39 shows a compositional bias: low complexity; sequence EAAPQPSQARPSSPISLS. Residue Thr-54 is modified to Phosphothreonine. Phosphoserine is present on Ser-57. Lys-77 participates in a covalent cross-link: Glycyl lysine isopeptide (Lys-Gly) (interchain with G-Cter in SUMO2). Residues Ser-79, Ser-124, Ser-127, Ser-132, Ser-144, Ser-145, and Ser-151 each carry the phosphoserine modification. Positions 156-198 constitute a CUE 1 domain; that stretch reads LKDAKLQTLKELFPQRSDSDLLKLIESTSTMDGAIAAALLMFG. Residues 201-246 form a disordered region; it reads GGGPRKRKLSSSSEEDDVNDDQSVKQPRGDRGEESNESAEASSNWE. Residues Ser-210, Ser-213, Ser-235, and Ser-238 each carry the phosphoserine modification. One can recognise a CUE 2 domain in the interval 247–290; that stretch reads KQESIVLKLQKEFPNFDKQELREVLKEHEWMYTEALESLKVFAE. The residue at position 298 (Ser-298) is a Phosphoserine. A disordered region spans residues 329–366; the sequence is VKPQNGFNKKRKKNVFNPKKAVEDSEYDSGSDAGSSLD. Residues Lys-330 and Lys-466 each participate in a glycyl lysine isopeptide (Lys-Gly) (interchain with G-Cter in SUMO2) cross-link. Residues 504–672 form the Helicase ATP-binding domain; the sequence is ALVHKHGLNG…MSLLNFVMPH (169 aa). 516–524 lines the ATP pocket; the sequence is ADEMGLGKT. The DEGH box motif lies at 623–626; sequence DEGH. The short motif at 716 to 733 is the Nuclear localization signal element; sequence RRVKEEVLKLLPPKKDRI. Residue Lys-719 forms a Glycyl lysine isopeptide (Lys-Gly) (interchain with G-Cter in SUMO2) linkage. The region spanning 853–1005 is the Helicase C-terminal domain; the sequence is ALGCILSELK…MTTVDEADEG (153 aa). An ATP-binding site is contributed by 892 to 899; sequence YLRLDGKT. Lys-991 participates in a covalent cross-link: Glycyl lysine isopeptide (Lys-Gly) (interchain with G-Cter in SUMO2). The DEAD box motif lies at 1000–1003; sequence DEAD.

It belongs to the SNF2/RAD54 helicase family. As to quaternary structure, binds to DNA preferentially in the vicinity of transcriptional start sites. Interacts with MSH2 and TRIM28. Part of a complex composed of TRIM28, HDAC1, HDAC2 and EHMT2. Interacts with PCNA.

The protein localises to the nucleus. It is found in the chromosome. The catalysed reaction is ATP + H2O = ADP + phosphate + H(+). Functionally, DNA helicase that possesses intrinsic ATP-dependent nucleosome-remodeling activity and is both required for DNA repair and heterochromatin organization. Promotes DNA end resection of double-strand breaks (DSBs) following DNA damage: probably acts by weakening histone DNA interactions in nucleosomes flanking DSBs. Required for the restoration of heterochromatin organization after replication. Acts at replication sites to facilitate the maintenance of heterochromatin by directing H3 and H4 histones deacetylation, H3 'Lys-9' trimethylation (H3K9me3) and restoration of silencing. In Mus musculus (Mouse), this protein is SWI/SNF-related matrix-associated actin-dependent regulator of chromatin subfamily A containing DEAD/H box 1 (Smarcad1).